A 371-amino-acid polypeptide reads, in one-letter code: Cytochrome b (371 aa).

The next 4 membrane-spanning stretches (helical) occupy residues 25 to 45, 69 to 90, 105 to 125, and 170 to 190; these read FGSM…FLSM, WMMQ…YMHI, WLSG…GYVL, and FFAL…VHIM. Positions 75 and 89 each coordinate heme b. Positions 174 and 188 each coordinate heme b. H193 contributes to the a ubiquinone binding site. The next 4 helical transmembrane spans lie at 218–238, 280–300, 312–332, and 339–358; these read YKDL…VSFF, LGGA…PFTH, LMQF…WTAT, and FTTI…MSNP.

It belongs to the cytochrome b family. In terms of assembly, the cytochrome bc1 complex contains 3 respiratory subunits (MT-CYB, CYC1 and UQCRFS1), 2 core proteins (UQCRC1 and UQCRC2) and probably 6 low-molecular weight proteins. Heme b serves as cofactor.

Its subcellular location is the mitochondrion inner membrane. Functionally, component of the ubiquinol-cytochrome c reductase complex (complex III or cytochrome b-c1 complex) that is part of the mitochondrial respiratory chain. The b-c1 complex mediates electron transfer from ubiquinol to cytochrome c. Contributes to the generation of a proton gradient across the mitochondrial membrane that is then used for ATP synthesis. The protein is Cytochrome b (MT-CYB) of Candoia carinata (Papuan tree boa).